The sequence spans 611 residues: U-box domain-containing protein 12 (611 aa).

The U-box domain maps to 227-301 (IIPDEFRCPI…SQWCEANGIE (75 aa)). 4 ARM repeats span residues 355–394 (VNNR…NLSI), 396–435 (ENNK…SLSV), 437–476 (DENK…NLCI), and 478–517 (QGNK…ILAG).

It carries out the reaction S-ubiquitinyl-[E2 ubiquitin-conjugating enzyme]-L-cysteine + [acceptor protein]-L-lysine = [E2 ubiquitin-conjugating enzyme]-L-cysteine + N(6)-ubiquitinyl-[acceptor protein]-L-lysine.. The protein operates within protein modification; protein ubiquitination. Functionally, possesses E3 ubiquitin-protein ligase in vitro. This is U-box domain-containing protein 12 (PUB12) from Oryza sativa subsp. japonica (Rice).